The sequence spans 485 residues: Glutamate mutase epsilon subunit (485 aa).

L-glutamate is bound at residue Arg-100. An adenosylcob(III)alamin-binding site is contributed by Asn-123. Residues 149–150 (KH) and Asp-171 contribute to the L-glutamate site. The adenosylcob(III)alamin site is built by Pro-180, Phe-297, Lys-326, and Glu-330.

It belongs to the methylaspartate mutase GlmE subunit family. As to quaternary structure, heterotetramer composed of 2 epsilon subunits (GlmE) and 2 sigma subunits (GlmS). GlmE exists as a homodimer and GlmS as a monomer. The cofactor is adenosylcob(III)alamin.

It carries out the reaction (2S,3S)-3-methyl-L-aspartate = L-glutamate. It functions in the pathway amino-acid degradation; L-glutamate degradation via mesaconate pathway; acetate and pyruvate from L-glutamate: step 1/4. Its function is as follows. Catalyzes the carbon skeleton rearrangement of L-glutamate to L-threo-3-methylaspartate ((2S,3S)-3-methylaspartate). The chain is Glutamate mutase epsilon subunit from Fusobacterium nucleatum subsp. nucleatum (strain ATCC 25586 / DSM 15643 / BCRC 10681 / CIP 101130 / JCM 8532 / KCTC 2640 / LMG 13131 / VPI 4355).